Consider the following 143-residue polypeptide: Meiotically up-regulated gene 128 protein (143 aa).

In terms of biological role, has a role in meiosis. The protein is Meiotically up-regulated gene 128 protein (mug128) of Schizosaccharomyces pombe (strain 972 / ATCC 24843) (Fission yeast).